The sequence spans 207 residues: uncharacterized protein (207 aa).

The 188-residue stretch at 14-201 folds into the YrdC-like domain; it reads ARLINQAVEI…SPVILREGSG (188 aa).

It belongs to the SUA5 family.

This is an uncharacterized protein from Haemophilus influenzae (strain ATCC 51907 / DSM 11121 / KW20 / Rd).